The chain runs to 79 residues: Putative membrane protein insertion efficiency factor (79 aa).

It belongs to the UPF0161 family.

Its subcellular location is the cell inner membrane. In terms of biological role, could be involved in insertion of integral membrane proteins into the membrane. This is Putative membrane protein insertion efficiency factor from Bacteroides thetaiotaomicron (strain ATCC 29148 / DSM 2079 / JCM 5827 / CCUG 10774 / NCTC 10582 / VPI-5482 / E50).